Here is a 564-residue protein sequence, read N- to C-terminus: Mitochondrial distribution and morphology protein 34 (564 aa).

One can recognise an SMP-LTD domain in the interval 1–208 (MAFNFNWSPL…VPEYRDRESE (208 aa)). 5 disordered regions span residues 208 to 240 (ESVN…NALN), 336 to 397 (SGGS…SAPT), 404 to 423 (QFSE…PQND), 434 to 517 (RISQ…DPRQ), and 532 to 564 (IQEE…AYGH). Residues 209-219 (SVNTLDQSSGP) show a composition bias toward polar residues. Residues 351–365 (SGRHPRPHGKKRKKR) are compositionally biased toward basic residues. A compositionally biased stretch (basic and acidic residues) spans 366–376 (VVDLRRPKTTD). The segment covering 380 to 390 (SVSGESVFSSE) has biased composition (low complexity). Composition is skewed to polar residues over residues 438–462 (GEHT…SRNS) and 477–503 (PRNS…SSAI).

This sequence belongs to the MDM34 family. As to quaternary structure, component of the ER-mitochondria encounter structure (ERMES) or MDM complex, composed of mmm1, mdm10, mdm12 and mdm34.

Its subcellular location is the mitochondrion outer membrane. Component of the ERMES/MDM complex, which serves as a molecular tether to connect the endoplasmic reticulum (ER) and mitochondria. Components of this complex are involved in the control of mitochondrial shape and protein biogenesis, and function in nonvesicular lipid trafficking between the ER and mitochondria. Mdm34 is required for the interaction of the ER-resident membrane protein mmm1 and the outer mitochondrial membrane-resident beta-barrel protein mdm10. This Talaromyces stipitatus (strain ATCC 10500 / CBS 375.48 / QM 6759 / NRRL 1006) (Penicillium stipitatum) protein is Mitochondrial distribution and morphology protein 34.